The chain runs to 490 residues: Cytochrome P450 2C13, male-specific (490 aa).

Residue cysteine 435 coordinates heme.

Belongs to the cytochrome P450 family. Requires heme as cofactor. Liver, and to a lesser extent in prostate, kidney, heart and brain.

The protein localises to the endoplasmic reticulum membrane. The protein resides in the microsome membrane. It carries out the reaction an organic molecule + reduced [NADPH--hemoprotein reductase] + O2 = an alcohol + oxidized [NADPH--hemoprotein reductase] + H2O + H(+). Its function is as follows. Cytochromes P450 are a group of heme-thiolate monooxygenases. In liver microsomes, this enzyme is involved in an NADPH-dependent electron transport pathway. It oxidizes a variety of structurally unrelated compounds, including steroids, fatty acids, and xenobiotics. In Rattus norvegicus (Rat), this protein is Cytochrome P450 2C13, male-specific (Cyp2c13).